The primary structure comprises 147 residues: Large ribosomal subunit protein bL9 (147 aa).

The protein belongs to the bacterial ribosomal protein bL9 family.

Its function is as follows. Binds to the 23S rRNA. The chain is Large ribosomal subunit protein bL9 from Clostridium botulinum (strain 657 / Type Ba4).